Here is a 326-residue protein sequence, read N- to C-terminus: Zinc finger protein 830 (326 aa).

A compositionally biased stretch (basic residues) spans 1-11 (MAASRKGKAVK). Residues 1–37 (MAASRKGKAVKAVKQEDLRRLMQETRRDSGRQKRVES) form a disordered region. The span at 13-36 (VKQEDLRRLMQETRRDSGRQKRVE) shows a compositional bias: basic and acidic residues. The segment at 50 to 72 (CALCDAPVKNALLWQTHVLGKQH) adopts a C2H2-type zinc-finger fold. A compositionally biased stretch (low complexity) spans 83 to 108 (TAPAHTPAPAHTPAHTPAAASSSSST). 3 disordered regions span residues 83 to 214 (TAPA…PVRD), 237 to 257 (EMRQ…EEGR), and 276 to 309 (EELR…EEEE). The span at 180–195 (HSGSVSKAEQQESQEP) shows a compositional bias: polar residues. The stretch at 224-295 (KDQLEREWEE…RSRRRSQRRE (72 aa)) forms a coiled coil. A compositionally biased stretch (basic and acidic residues) spans 276–286 (EELRAKQETAR). Residues 298–309 (PMQEEEPLEEEE) are compositionally biased toward acidic residues.

It localises to the nucleus. Its subcellular location is the chromosome. The protein localises to the nucleus speckle. Functionally, may act as an important regulator of the cell cycle that participates in the maintenance of genome integrity. The sequence is that of Zinc finger protein 830 from Danio rerio (Zebrafish).